Consider the following 131-residue polypeptide: Methylglyoxal synthase (131 aa).

Residues 1–131 (MKIALIAHDK…GDLDYRKLRK (131 aa)) enclose the MGS-like domain. Residues His-8, Lys-12, 34–37 (TGTT), and 54–55 (SG) each bind substrate. Catalysis depends on Asp-60, which acts as the Proton donor/acceptor. His-87 provides a ligand contact to substrate.

It belongs to the methylglyoxal synthase family.

It carries out the reaction dihydroxyacetone phosphate = methylglyoxal + phosphate. Functionally, catalyzes the formation of methylglyoxal from dihydroxyacetone phosphate. The chain is Methylglyoxal synthase from Bacillus cereus (strain ATCC 14579 / DSM 31 / CCUG 7414 / JCM 2152 / NBRC 15305 / NCIMB 9373 / NCTC 2599 / NRRL B-3711).